The following is a 424-amino-acid chain: Dual-specificity RNA methyltransferase RlmN (424 aa).

Catalysis depends on glutamate 132, which acts as the Proton acceptor. Positions 138 to 388 constitute a Radical SAM core domain; that stretch reads GPDRGTLCVS…VRTPRGRDIL (251 aa). Cysteine 145 and cysteine 391 are joined by a disulfide. [4Fe-4S] cluster is bound by residues cysteine 152, cysteine 156, and cysteine 159. S-adenosyl-L-methionine-binding positions include 217–218, serine 249, 271–273, and asparagine 348; these read GE and SLH. The active-site S-methylcysteine intermediate is the cysteine 391.

It belongs to the radical SAM superfamily. RlmN family. [4Fe-4S] cluster serves as cofactor.

It localises to the cytoplasm. It catalyses the reaction adenosine(2503) in 23S rRNA + 2 reduced [2Fe-2S]-[ferredoxin] + 2 S-adenosyl-L-methionine = 2-methyladenosine(2503) in 23S rRNA + 5'-deoxyadenosine + L-methionine + 2 oxidized [2Fe-2S]-[ferredoxin] + S-adenosyl-L-homocysteine. The catalysed reaction is adenosine(37) in tRNA + 2 reduced [2Fe-2S]-[ferredoxin] + 2 S-adenosyl-L-methionine = 2-methyladenosine(37) in tRNA + 5'-deoxyadenosine + L-methionine + 2 oxidized [2Fe-2S]-[ferredoxin] + S-adenosyl-L-homocysteine. Specifically methylates position 2 of adenine 2503 in 23S rRNA and position 2 of adenine 37 in tRNAs. m2A2503 modification seems to play a crucial role in the proofreading step occurring at the peptidyl transferase center and thus would serve to optimize ribosomal fidelity. The protein is Dual-specificity RNA methyltransferase RlmN of Methylobacterium radiotolerans (strain ATCC 27329 / DSM 1819 / JCM 2831 / NBRC 15690 / NCIMB 10815 / 0-1).